A 442-amino-acid chain; its full sequence is Putative neutral sphingomyelinase (442 aa).

Glu-46 is a binding site for Mg(2+). The Proton acceptor role is filled by His-264. Residues 309–330 (ALTGEDDQSSQHQPEIQCNGSS) form a disordered region. Positions 318 to 330 (SQHQPEIQCNGSS) are enriched in polar residues. A run of 2 helical transmembrane segments spans residues 362-384 (RILYYSAATFLFVLLVLLVEFTA) and 391-413 (IFLLLKFIVFGVILFCVFMASIW).

It belongs to the neutral sphingomyelinase family.

The protein resides in the membrane. It carries out the reaction a sphingomyelin + H2O = phosphocholine + an N-acylsphing-4-enine + H(+). The protein operates within lipid metabolism; sphingolipid metabolism. This Drosophila melanogaster (Fruit fly) protein is Putative neutral sphingomyelinase.